A 661-amino-acid chain; its full sequence is DnaJ protein ERDJ2B (661 aa).

Residues 1-8 (MAESEENS) are Lumenal-facing. A helical membrane pass occupies residues 9 to 29 (VLFPIFILTMMAIPLVPYTFV). Over 30 to 65 (KLSRAFSKKQRSIHCQCLECDRSGKYKRSISQSISS) the chain is Cytoplasmic. Residues 66 to 86 (FTSCSNLTVVLLWIVMIFLIY) traverse the membrane as a helical segment. The Lumenal portion of the chain corresponds to 87–190 (HTKNMSRESQ…FILNMNGESG (104 aa)). Asparagine 90 carries N-linked (GlcNAc...) asparagine glycosylation. One can recognise a J domain in the interval 99–164 (EPFGILGLEP…LSRENFEKYG (66 aa)). The chain crosses the membrane as a helical span at residues 191 to 211 (GILLLCTVGLCILLPLVIASI). One can recognise an SEC63 domain in the interval 206–597 (LVIASIYLWR…IGCDQKTSLK (392 aa)). Topologically, residues 212-661 (YLWRSSKYTG…SSEESGSDEE (450 aa)) are cytoplasmic. The tract at residues 608–661 (EGENAEEGLEEEDDEIEEEDYESEYSEDEEDKKRGSKKKVNKESSSEESGSDEE) is disordered. Over residues 609-637 (GENAEEGLEEEDDEIEEEDYESEYSEDEE) the composition is skewed to acidic residues.

In terms of assembly, interacts with OEP61/TPR7. As to expression, expressed in leaves, flower buds and flowers.

It localises to the endoplasmic reticulum membrane. Required for integral membrane and secreted preprotein translocation across the endoplasmic reticulum membrane. The polypeptide is DnaJ protein ERDJ2B (ERDJ2B) (Arabidopsis thaliana (Mouse-ear cress)).